Here is a 417-residue protein sequence, read N- to C-terminus: Gamma-glutamyl phosphate reductase (417 aa).

The protein belongs to the gamma-glutamyl phosphate reductase family.

It is found in the cytoplasm. It carries out the reaction L-glutamate 5-semialdehyde + phosphate + NADP(+) = L-glutamyl 5-phosphate + NADPH + H(+). It functions in the pathway amino-acid biosynthesis; L-proline biosynthesis; L-glutamate 5-semialdehyde from L-glutamate: step 2/2. Catalyzes the NADPH-dependent reduction of L-glutamate 5-phosphate into L-glutamate 5-semialdehyde and phosphate. The product spontaneously undergoes cyclization to form 1-pyrroline-5-carboxylate. The protein is Gamma-glutamyl phosphate reductase of Escherichia fergusonii (strain ATCC 35469 / DSM 13698 / CCUG 18766 / IAM 14443 / JCM 21226 / LMG 7866 / NBRC 102419 / NCTC 12128 / CDC 0568-73).